The following is a 231-amino-acid chain: uncharacterized protein (231 aa).

3 helical membrane passes run 6-26 (IKLIFIVCSTVIVTGVLYKYI), 39-59 (NIVSFYALLLLLFSIIYSTFS), and 66-86 (FCFQLAMWAVIFLVIITGYAF).

The protein localises to the cell membrane. This is an uncharacterized protein from Rickettsia prowazekii (strain Madrid E).